Reading from the N-terminus, the 372-residue chain is Glycerol-3-phosphate dehydrogenase [NAD(+)] (372 aa).

A compositionally biased stretch (polar residues) spans M1–S16. Residues M1–S23 form a disordered region. Residues G29–G34, F60, F117, K140, and A173 contribute to the NAD(+) site. K140 provides a ligand contact to substrate. K225 acts as the Proton acceptor in catalysis. Positions 289, 318, and 320 each coordinate NAD(+). Residue R289–N290 coordinates substrate.

Belongs to the NAD-dependent glycerol-3-phosphate dehydrogenase family.

It carries out the reaction sn-glycerol 3-phosphate + NAD(+) = dihydroxyacetone phosphate + NADH + H(+). This chain is Glycerol-3-phosphate dehydrogenase [NAD(+)] (GPDH), found in Cuphea lanceolata (Cigar flower).